Here is a 278-residue protein sequence, read N- to C-terminus: 4-deoxy-L-threo-5-hexosulose-uronate ketol-isomerase (278 aa).

4 residues coordinate Zn(2+): His-196, His-198, Glu-203, and His-245.

It belongs to the KduI family. The cofactor is Zn(2+).

It carries out the reaction 5-dehydro-4-deoxy-D-glucuronate = 3-deoxy-D-glycero-2,5-hexodiulosonate. The protein operates within glycan metabolism; pectin degradation; 2-dehydro-3-deoxy-D-gluconate from pectin: step 4/5. Catalyzes the isomerization of 5-dehydro-4-deoxy-D-glucuronate to 3-deoxy-D-glycero-2,5-hexodiulosonate. This chain is 4-deoxy-L-threo-5-hexosulose-uronate ketol-isomerase, found in Yersinia pestis bv. Antiqua (strain Antiqua).